Reading from the N-terminus, the 164-residue chain is Disulfide bond formation protein B (164 aa).

Topologically, residues 1-9 (MTLPSARTC) are cytoplasmic. The chain crosses the membrane as a helical span at residues 10 to 26 (FLLGFLFCAALLAAALY). The Periplasmic segment spans residues 27–44 (FQFSGGLEPCPLCISQRI). A disulfide bond links Cys-36 and Cys-39. Residues 45–61 (MVLAVALVFLAAAIHHP) form a helical membrane-spanning segment. Over 62–68 (ASLGIRA) the chain is Cytoplasmic. Residues 69 to 85 (YALLGTAVALGGASISG) traverse the membrane as a helical segment. Over 86 to 142 (RHVWLLHLPPEEVPECGPGLSYMFRNFPLGDTLKAMLSGTGDCAKVDWTFLGLSMPA) the chain is Periplasmic. A disulfide bridge links Cys-101 with Cys-128. The chain crosses the membrane as a helical span at residues 143–161 (WVLICFLGLGAFSLLQWWN). At 162–164 (AER) the chain is on the cytoplasmic side.

The protein belongs to the DsbB family.

The protein resides in the cell inner membrane. In terms of biological role, required for disulfide bond formation in some periplasmic proteins. Acts by oxidizing the DsbA protein. The protein is Disulfide bond formation protein B of Methylococcus capsulatus (strain ATCC 33009 / NCIMB 11132 / Bath).